A 284-amino-acid chain; its full sequence is Bifunctional protein FolD (284 aa).

NADP(+) contacts are provided by residues 165-167 (GAS), Ile-190, and Ile-231.

The protein belongs to the tetrahydrofolate dehydrogenase/cyclohydrolase family. In terms of assembly, homodimer.

It carries out the reaction (6R)-5,10-methylene-5,6,7,8-tetrahydrofolate + NADP(+) = (6R)-5,10-methenyltetrahydrofolate + NADPH. It catalyses the reaction (6R)-5,10-methenyltetrahydrofolate + H2O = (6R)-10-formyltetrahydrofolate + H(+). It functions in the pathway one-carbon metabolism; tetrahydrofolate interconversion. In terms of biological role, catalyzes the oxidation of 5,10-methylenetetrahydrofolate to 5,10-methenyltetrahydrofolate and then the hydrolysis of 5,10-methenyltetrahydrofolate to 10-formyltetrahydrofolate. The protein is Bifunctional protein FolD of Alkaliphilus metalliredigens (strain QYMF).